We begin with the raw amino-acid sequence, 241 residues long: Glucosamine-6-phosphate deaminase (241 aa).

Asp-67 (proton acceptor; for enolization step) is an active-site residue. Asn-136 serves as the catalytic For ring-opening step. His-138 (proton acceptor; for ring-opening step) is an active-site residue. Residue Glu-143 is the For ring-opening step of the active site.

This sequence belongs to the glucosamine/galactosamine-6-phosphate isomerase family. NagB subfamily.

It catalyses the reaction alpha-D-glucosamine 6-phosphate + H2O = beta-D-fructose 6-phosphate + NH4(+). Its pathway is amino-sugar metabolism; N-acetylneuraminate degradation; D-fructose 6-phosphate from N-acetylneuraminate: step 5/5. Catalyzes the reversible isomerization-deamination of glucosamine 6-phosphate (GlcN6P) to form fructose 6-phosphate (Fru6P) and ammonium ion. This chain is Glucosamine-6-phosphate deaminase, found in Clostridium acetobutylicum (strain ATCC 824 / DSM 792 / JCM 1419 / IAM 19013 / LMG 5710 / NBRC 13948 / NRRL B-527 / VKM B-1787 / 2291 / W).